Reading from the N-terminus, the 293-residue chain is Ribosomal protein L11 methyltransferase (293 aa).

S-adenosyl-L-methionine contacts are provided by threonine 145, glycine 166, aspartate 188, and asparagine 230.

The protein belongs to the methyltransferase superfamily. PrmA family.

The protein resides in the cytoplasm. The catalysed reaction is L-lysyl-[protein] + 3 S-adenosyl-L-methionine = N(6),N(6),N(6)-trimethyl-L-lysyl-[protein] + 3 S-adenosyl-L-homocysteine + 3 H(+). Its function is as follows. Methylates ribosomal protein L11. The protein is Ribosomal protein L11 methyltransferase of Haemophilus ducreyi (strain 35000HP / ATCC 700724).